Reading from the N-terminus, the 466-residue chain is MSNNTDLSPVHVIGGGLAGSEAAWQIAQAGVPVVLHEMRPVRGTDAHKTEQLAELVCSNSFRSDDAETNAVGVLHAEMRLAGSLIMACADAHQVPAGGALAVDREGFSQAVTARLEAHPLITIEREEITGLPPTEWGTTIIATGPLTAPSLAEAIAAETDADALAFFDAIAPIIHFDSINMDVCWFQSRYDKVGPGGTGKDYINCPMDKEQYEAFVAALIEGDKTDFKEWEGTPYFDGCLPIEVMAERGPETLRHGPMKPMGLTNAHNPTVKPYAVVQLRQENALGTLYNMVGFQTKLKYGSQTGIFKMIPGLENAEFARLGGLHRNTYLNSPVLLDNVLRLKSRQTLRFAGQVTGCEGYVESSAIGLLAGRFTAAEKLSQAAVPPPPTTAFGALLGHITGGHIVTDDEPGKRSFQPMNVNFGLFPPVDVPKPEGKRLRGKEKTIAKKRALSARALADCRNWLSLY.

14 to 19 (GGGLAG) contributes to the FAD binding site.

The protein belongs to the MnmG family. TrmFO subfamily. FAD is required as a cofactor.

It localises to the cytoplasm. It carries out the reaction uridine(54) in tRNA + (6R)-5,10-methylene-5,6,7,8-tetrahydrofolate + NADH + H(+) = 5-methyluridine(54) in tRNA + (6S)-5,6,7,8-tetrahydrofolate + NAD(+). The catalysed reaction is uridine(54) in tRNA + (6R)-5,10-methylene-5,6,7,8-tetrahydrofolate + NADPH + H(+) = 5-methyluridine(54) in tRNA + (6S)-5,6,7,8-tetrahydrofolate + NADP(+). Its function is as follows. Catalyzes the folate-dependent formation of 5-methyl-uridine at position 54 (M-5-U54) in all tRNAs. This is Methylenetetrahydrofolate--tRNA-(uracil-5-)-methyltransferase TrmFO from Brucella suis (strain ATCC 23445 / NCTC 10510).